We begin with the raw amino-acid sequence, 714 residues long: Elongation factor G-like protein (714 aa).

Positions 21–289 constitute a tr-type G domain; sequence GGVRNVVLVG…VATRGFPSPM (269 aa). Residues 30–37 form a G1 region; it reads GPSGGGKT. 30 to 37 is a GTP binding site; that stretch reads GPSGGGKT. The segment at 73 to 77 is G2; it reads QRSVG. The G3 stretch occupies residues 94–97; sequence DTPG. GTP-binding positions include 94–98 and 148–151; these read DTPGY and TKLD. Residues 148–151 are G4; it reads TKLD. Residues 267–269 form a G5 region; sequence CSS.

Belongs to the TRAFAC class translation factor GTPase superfamily. Classic translation factor GTPase family. EF-G/EF-2 subfamily.

In Mycobacterium tuberculosis (strain CDC 1551 / Oshkosh), this protein is Elongation factor G-like protein.